A 363-amino-acid chain; its full sequence is Probable aminomethyltransferase (363 aa).

The protein belongs to the GcvT family. As to quaternary structure, the glycine cleavage system is composed of four proteins: P, T, L and H.

It catalyses the reaction N(6)-[(R)-S(8)-aminomethyldihydrolipoyl]-L-lysyl-[protein] + (6S)-5,6,7,8-tetrahydrofolate = N(6)-[(R)-dihydrolipoyl]-L-lysyl-[protein] + (6R)-5,10-methylene-5,6,7,8-tetrahydrofolate + NH4(+). Its function is as follows. The glycine cleavage system catalyzes the degradation of glycine. This is Probable aminomethyltransferase from Halobacterium salinarum (strain ATCC 29341 / DSM 671 / R1).